A 218-amino-acid chain; its full sequence is Putative glutamine transport system permease protein GlnP (218 aa).

An ABC transmembrane type-1 domain is found at 19–208 (TLVTLKYSVI…ILVILISFIA (190 aa)). 4 helical membrane passes run 25 to 45 (YSVI…ICKV), 57 to 79 (FYTS…FAAP), 86 to 108 (FNVF…SEVI), and 187 to 207 (FFPM…ISFI).

This sequence belongs to the binding-protein-dependent transport system permease family. HisMQ subfamily.

The protein resides in the cell inner membrane. Part of the binding-protein-dependent transport system for glutamine; probably responsible for the translocation of the substrate across the membrane. This chain is Putative glutamine transport system permease protein GlnP (glnP), found in Rickettsia prowazekii (strain Madrid E).